We begin with the raw amino-acid sequence, 151 residues long: SsrA-binding protein (151 aa).

It belongs to the SmpB family.

It localises to the cytoplasm. Required for rescue of stalled ribosomes mediated by trans-translation. Binds to transfer-messenger RNA (tmRNA), required for stable association of tmRNA with ribosomes. tmRNA and SmpB together mimic tRNA shape, replacing the anticodon stem-loop with SmpB. tmRNA is encoded by the ssrA gene; the 2 termini fold to resemble tRNA(Ala) and it encodes a 'tag peptide', a short internal open reading frame. During trans-translation Ala-aminoacylated tmRNA acts like a tRNA, entering the A-site of stalled ribosomes, displacing the stalled mRNA. The ribosome then switches to translate the ORF on the tmRNA; the nascent peptide is terminated with the 'tag peptide' encoded by the tmRNA and targeted for degradation. The ribosome is freed to recommence translation, which seems to be the essential function of trans-translation. The polypeptide is SsrA-binding protein (Campylobacter concisus (strain 13826)).